We begin with the raw amino-acid sequence, 359 residues long: MISKLSVNPTFSPSYNIIVDSVLDFSHILEYVTNKQVLVVTNTTVAKLYLTKFLAALVDDLDVRTCILEDGEQYKSQQSLDKILSTLLENHFTRNSTVLVALGGGVIGDITGFAAAIYQRGIDFIQIPTTLLSQVDSSVGGKTAINHQLGKNMIGAFYQPKVVYTSIEFYKTLLQREYIAGMAEVVKYAFISKDFYLWLDSNRDKILAKDSVTLIEMVKRSCQIKAQVVAMDEKELTGARAILNFGHTFGHAIEKCQNYRGLKHGEAVGVGMAQAIDFSHYLGLISQQQAKDFKDFIVSFGISIDFPNDICQKEFLEAMLLDKKNSNKELKFILIENIGSLSLQKQSKNELEQFLDISR.

NAD(+)-binding positions include 70–75 (DGEQYK), 105–109 (GVIGD), 129–130 (TT), lysine 142, lysine 151, and 169–172 (FYKT). Residues glutamate 184, histidine 247, and histidine 264 each contribute to the Zn(2+) site.

This sequence belongs to the sugar phosphate cyclases superfamily. Dehydroquinate synthase family. Requires Co(2+) as cofactor. The cofactor is Zn(2+). NAD(+) is required as a cofactor.

Its subcellular location is the cytoplasm. It carries out the reaction 7-phospho-2-dehydro-3-deoxy-D-arabino-heptonate = 3-dehydroquinate + phosphate. It participates in metabolic intermediate biosynthesis; chorismate biosynthesis; chorismate from D-erythrose 4-phosphate and phosphoenolpyruvate: step 2/7. In terms of biological role, catalyzes the conversion of 3-deoxy-D-arabino-heptulosonate 7-phosphate (DAHP) to dehydroquinate (DHQ). The chain is 3-dehydroquinate synthase from Francisella tularensis subsp. holarctica (strain OSU18).